The primary structure comprises 249 residues: MDDTGAAPVVIFGGRSQIGGELARRLAAGATMVLAARNADQLADQAAALRAAGAIAVHTREFDADDLAAHGPLVASLVAEHGPIGTAVLAFGILGDQARAETDAAHAVAIVHTDYVAQVSLLTHLAAAMRTAGRGSLVVFSSVAGIRVRRANYVYGSAKAGLDGFASGLADALHGTGVRLLIARPGFVIGRMTEGMTPAPLSVTPERVAAATARALVNGKRVVWIPWALRPMFVALRLLPRFVWRRMPR.

Residue isoleucine 11–leucine 34 coordinates NADP(+). Substrate is bound at residue serine 142. Residue tyrosine 155 is the Proton acceptor of the active site.

This sequence belongs to the short-chain dehydrogenases/reductases (SDR) family.

This is an uncharacterized protein from Mycobacterium tuberculosis (strain ATCC 25618 / H37Rv).